The following is a 494-amino-acid chain: UDP-N-acetylmuramoyl-L-alanyl-D-glutamate--L-lysine ligase (494 aa).

S30 contributes to the UDP-N-acetyl-alpha-D-muramoyl-L-alanyl-D-glutamate binding site. 110-116 (GTNGKTS) provides a ligand contact to ATP. UDP-N-acetyl-alpha-D-muramoyl-L-alanyl-D-glutamate-binding positions include 152-153 (TT), S179, and R187. K219 carries the post-translational modification N6-carboxylysine. The L-lysine recognition motif motif lies at 406-409 (DNPA).

The protein belongs to the MurCDEF family. MurE subfamily. Post-translationally, carboxylation is probably crucial for Mg(2+) binding and, consequently, for the gamma-phosphate positioning of ATP.

Its subcellular location is the cytoplasm. It carries out the reaction UDP-N-acetyl-alpha-D-muramoyl-L-alanyl-D-glutamate + L-lysine + ATP = UDP-N-acetyl-alpha-D-muramoyl-L-alanyl-gamma-D-glutamyl-L-lysine + ADP + phosphate + H(+). Its pathway is cell wall biogenesis; peptidoglycan biosynthesis. Catalyzes the addition of L-lysine to the nucleotide precursor UDP-N-acetylmuramoyl-L-alanyl-D-glutamate (UMAG) in the biosynthesis of bacterial cell-wall peptidoglycan. In Staphylococcus aureus (strain Mu3 / ATCC 700698), this protein is UDP-N-acetylmuramoyl-L-alanyl-D-glutamate--L-lysine ligase.